Reading from the N-terminus, the 32-residue chain is Unknown protein from spot 206 of 2D-PAGE of etiolated coleoptile (32 aa).

This chain is Unknown protein from spot 206 of 2D-PAGE of etiolated coleoptile, found in Zea mays (Maize).